The chain runs to 535 residues: MKAIDNQIRNISSSHQDKHSDKVNSHQHHGKVDKTHRAKIVEFDKLDNDSQIDNDFGLHIIYFLQHGHWKVNDRSHQMEKVWFYNSEPSIDIQEYNRFADNTTDTFIFTIIPDNNHVLKLSSPITVTVECKGGYYFINSSGDKSDIIYKVDGLSIIARNFFTLLSGNFKPDWRWDVSKETFTKEKFDSYVKSVFSKIDFYKQCGVINPQNANTAYFGDTDGRVGAVLYALLVSGHIGIREKGWSLLCELLKHEEMASSAYKHKNNKVLYDLLNTRDMILNELHQHVFLKDDAITPCIFLGDHTGDRFSTIFGDKYILTLLNSMRNMEGNKDSRINKNVVVLAGNHEINFNGNYTARLANHKLSAGDTYNLIKTLDVCNYDSERQVLTSHHGIIRDEEKKCYCLGALQVPFNQMKNPTDPEELANIFNKKHKEHMDDPLFHLIRSNTLKPTPVYANYFDNTTDFRPARERIFICGETLKGEDPSKYIRQKYGHHGPGVDHNQQFDNGIMGLNSLKEARDKNNKIIYSSGLSCFQLH.

A disordered region spans residues 1–34; that stretch reads MKAIDNQIRNISSSHQDKHSDKVNSHQHHGKVDK. The segment covering 15–34 has biased composition (basic and acidic residues); the sequence is HQDKHSDKVNSHQHHGKVDK.

This is an uncharacterized protein from Escherichia coli (strain K12).